A 241-amino-acid chain; its full sequence is Endothelial protein C receptor (241 aa).

The signal sequence occupies residues 1–17 (MLTTLLPLLPLLLPGWA). The Extracellular segment spans residues 18–212 (LCSQEASDGP…GSQTGRSYTS (195 aa)). Asparagine 49, asparagine 66, asparagine 138, and asparagine 174 each carry an N-linked (GlcNAc...) asparagine glycan. Disulfide bonds link cysteine 120/cysteine 188 and cysteine 221/cysteine 234. Residues 213 to 233 (LVLGVLVGCFIVTGVAVGIFL) traverse the membrane as a helical segment. Over 234 to 241 (CTGGRRRC) the chain is Cytoplasmic.

As to expression, expressed in endothelial cells.

It localises to the membrane. In terms of biological role, binds activated protein C. Enhances protein C activation by the thrombin-thrombomodulin complex; plays a role in the protein C pathway controlling blood coagulation. The sequence is that of Endothelial protein C receptor (PROCR) from Bos taurus (Bovine).